The sequence spans 239 residues: Putative glutamine amidotransferase-like protein YfeJ (239 aa).

The Glutamine amidotransferase type-1 domain maps to 1 to 200 (MRVHFVVHES…IQHSQQELAD (200 aa)).

This Salmonella typhimurium (strain LT2 / SGSC1412 / ATCC 700720) protein is Putative glutamine amidotransferase-like protein YfeJ (yfeJ).